The chain runs to 243 residues: MNYSPRIQDIPASERPRERLVAVGAKYLSNAELIAILISTGDRHRNLSAVGLAQFILQTCSQGKRDPFDMLRHTTPQELTSIPGVGLAKAAQILAGIELGKRIFQAKPSEKIIVDSPEAAAIALSNDLMWQDQERFAVLCLDVKNTLIATRVVTIGLATETLAHPREIFREVIKHGATRLIIAHNHPSGNVDPSPEDLQLTERLLQSAQILGIPLLDHLILGRDNFGSLRQKTALWDSYPQPE.

One can recognise an MPN domain in the interval Ile112–Leu235. His184, His186, and Asp197 together coordinate Zn(2+). The JAMM motif signature appears at His184–Asp197.

It belongs to the UPF0758 family.

The chain is UPF0758 protein SYNPCC7002_A0220 from Picosynechococcus sp. (strain ATCC 27264 / PCC 7002 / PR-6) (Agmenellum quadruplicatum).